Here is a 251-residue protein sequence, read N- to C-terminus: SNAP25 homologous protein SNAP29 (251 aa).

Residues 1-52 (MAPKNSSWNPFDDEKEAAKSFSLNPFDDDDDDKEVEKRFTSSLKPSGGKENQ) form a disordered region. Polar residues predominate over residues 40–52 (TSSLKPSGGKENQ). Residues 186-248 (KTQIAKQDEA…KQSNQRARYL (63 aa)) form the t-SNARE coiled-coil homology domain.

The protein belongs to the SNAP-25 family.

The protein localises to the membrane. The protein resides in the cytoplasm. Functionally, SNAREs, soluble N-ethylmaleimide-sensitive factor-attachment protein receptors, are essential proteins for fusion of cellular membranes. SNAREs localized on opposing membranes assemble to form a trans-SNARE complex, an extended, parallel four alpha-helical bundle that drives membrane fusion. In Arabidopsis thaliana (Mouse-ear cress), this protein is SNAP25 homologous protein SNAP29 (SNAP29).